Reading from the N-terminus, the 274-residue chain is Undecaprenyl-diphosphatase (274 aa).

Transmembrane regions (helical) follow at residues 4-24 (ILLLKALILGIVEGLTEFLPI), 46-63 (LFEIVIQSGAILAVVWEY), 82-102 (KFILNLFVAFLPLAILGLAFG), 109-129 (LFNPVTVASTFILGAFVILWA), 184-204 (ATEFSFFLAIPTLIVATFYQL), 218-238 (MWAVGFVAAFVSAFLCVRWLL), and 249-269 (FAWYRIAFGIVVLATWQFGWV).

Belongs to the UppP family.

It is found in the cell inner membrane. It catalyses the reaction di-trans,octa-cis-undecaprenyl diphosphate + H2O = di-trans,octa-cis-undecaprenyl phosphate + phosphate + H(+). Functionally, catalyzes the dephosphorylation of undecaprenyl diphosphate (UPP). Confers resistance to bacitracin. This chain is Undecaprenyl-diphosphatase, found in Dechloromonas aromatica (strain RCB).